The sequence spans 520 residues: UDP-N-acetylmuramoyl-L-alanyl-D-glutamate--2,6-diaminopimelate ligase (520 aa).

Leucine 48 contacts UDP-N-acetyl-alpha-D-muramoyl-L-alanyl-D-glutamate. 134–140 (GTSGKTT) provides a ligand contact to ATP. UDP-N-acetyl-alpha-D-muramoyl-L-alanyl-D-glutamate contacts are provided by residues 176–177 (TT), serine 203, and arginine 211. Lysine 243 carries the N6-carboxylysine modification. Meso-2,6-diaminopimelate-binding positions include arginine 405, 429-432 (DNPR), glycine 483, and glutamate 487. The Meso-diaminopimelate recognition motif motif lies at 429-432 (DNPR).

The protein belongs to the MurCDEF family. MurE subfamily. The cofactor is Mg(2+). In terms of processing, carboxylation is probably crucial for Mg(2+) binding and, consequently, for the gamma-phosphate positioning of ATP.

It localises to the cytoplasm. It catalyses the reaction UDP-N-acetyl-alpha-D-muramoyl-L-alanyl-D-glutamate + meso-2,6-diaminopimelate + ATP = UDP-N-acetyl-alpha-D-muramoyl-L-alanyl-gamma-D-glutamyl-meso-2,6-diaminopimelate + ADP + phosphate + H(+). It functions in the pathway cell wall biogenesis; peptidoglycan biosynthesis. Its function is as follows. Catalyzes the addition of meso-diaminopimelic acid to the nucleotide precursor UDP-N-acetylmuramoyl-L-alanyl-D-glutamate (UMAG) in the biosynthesis of bacterial cell-wall peptidoglycan. The protein is UDP-N-acetylmuramoyl-L-alanyl-D-glutamate--2,6-diaminopimelate ligase of Mycolicibacterium paratuberculosis (strain ATCC BAA-968 / K-10) (Mycobacterium paratuberculosis).